Reading from the N-terminus, the 506-residue chain is Cysteine--tRNA ligase (506 aa).

Residue Cys34 coordinates Zn(2+). Positions 36-46 match the 'HIGH' region motif; that stretch reads PTVYDFAHIGN. Zn(2+) is bound by residues Cys230, His269, and Glu273. The short motif at 302-306 is the 'KMSKS' region element; the sequence is KMSKS. Lys305 contacts ATP.

This sequence belongs to the class-I aminoacyl-tRNA synthetase family. As to quaternary structure, monomer. Requires Zn(2+) as cofactor.

The protein resides in the cytoplasm. It carries out the reaction tRNA(Cys) + L-cysteine + ATP = L-cysteinyl-tRNA(Cys) + AMP + diphosphate. The sequence is that of Cysteine--tRNA ligase from Brucella abortus (strain S19).